The primary structure comprises 202 residues: 7-methyl-GTP pyrophosphatase (202 aa).

The active-site Proton acceptor is Asp-70.

It belongs to the Maf family. YceF subfamily. A divalent metal cation is required as a cofactor.

Its subcellular location is the cytoplasm. The enzyme catalyses N(7)-methyl-GTP + H2O = N(7)-methyl-GMP + diphosphate + H(+). Functionally, nucleoside triphosphate pyrophosphatase that hydrolyzes 7-methyl-GTP (m(7)GTP). May have a dual role in cell division arrest and in preventing the incorporation of modified nucleotides into cellular nucleic acids. The sequence is that of 7-methyl-GTP pyrophosphatase from Pseudoalteromonas translucida (strain TAC 125).